The following is a 202-amino-acid chain: Nucleoside triphosphate pyrophosphatase (202 aa).

The Proton acceptor role is filled by aspartate 79.

Belongs to the Maf family. A divalent metal cation is required as a cofactor.

The protein localises to the cytoplasm. It carries out the reaction a ribonucleoside 5'-triphosphate + H2O = a ribonucleoside 5'-phosphate + diphosphate + H(+). The enzyme catalyses a 2'-deoxyribonucleoside 5'-triphosphate + H2O = a 2'-deoxyribonucleoside 5'-phosphate + diphosphate + H(+). Functionally, nucleoside triphosphate pyrophosphatase. May have a dual role in cell division arrest and in preventing the incorporation of modified nucleotides into cellular nucleic acids. The protein is Nucleoside triphosphate pyrophosphatase of Nitrobacter winogradskyi (strain ATCC 25391 / DSM 10237 / CIP 104748 / NCIMB 11846 / Nb-255).